The sequence spans 491 residues: Probable protein phosphatase 2C 52 (491 aa).

The span at 1 to 11 (MVYDGAVKDQE) shows a compositional bias: basic and acidic residues. Residues 1-211 (MVYDGAVKDQ…REREKERERV (211 aa)) are disordered. Low complexity predominate over residues 12-54 (SSANPASASAALSEASAAASEVTAAAAAGAGAGAAEEGAAVSG). Residues 66–78 (GVRHPLKHRRFRA) are compositionally biased toward basic residues. A compositionally biased stretch (acidic residues) spans 95–105 (VADEEASEVEQ). A compositionally biased stretch (basic and acidic residues) spans 187-211 (VEEKKHKDQENKHKEREREKERERV). The region spanning 229–475 (SCGYSSFRGK…DNITCIVVKF (247 aa)) is the PPM-type phosphatase domain. Mn(2+) contacts are provided by Asp-265, Gly-266, Asp-427, and Asp-466.

This sequence belongs to the PP2C family. It depends on Mg(2+) as a cofactor. The cofactor is Mn(2+).

The enzyme catalyses O-phospho-L-seryl-[protein] + H2O = L-seryl-[protein] + phosphate. It catalyses the reaction O-phospho-L-threonyl-[protein] + H2O = L-threonyl-[protein] + phosphate. This chain is Probable protein phosphatase 2C 52, found in Oryza sativa subsp. japonica (Rice).